The chain runs to 235 residues: Uridylate kinase (235 aa).

8–11 (KFSG) provides a ligand contact to ATP. The segment at 16-21 (GAEGYG) is involved in allosteric activation by GTP. Residue glycine 50 participates in UMP binding. Residues glycine 51 and arginine 55 each contribute to the ATP site. UMP-binding positions include aspartate 71 and 132 to 139 (TGNPYFTT). Residues threonine 159, tyrosine 165, and aspartate 168 each coordinate ATP.

The protein belongs to the UMP kinase family. Homohexamer.

It is found in the cytoplasm. It carries out the reaction UMP + ATP = UDP + ADP. It functions in the pathway pyrimidine metabolism; CTP biosynthesis via de novo pathway; UDP from UMP (UMPK route): step 1/1. With respect to regulation, allosterically activated by GTP. Inhibited by UTP. Catalyzes the reversible phosphorylation of UMP to UDP. The chain is Uridylate kinase from Aliarcobacter butzleri (strain RM4018) (Arcobacter butzleri).